Reading from the N-terminus, the 362-residue chain is DNA polymerase IV (362 aa).

The UmuC domain maps to Ile6 to Gly187. 2 residues coordinate Mg(2+): Asp10 and Asp105. Glu106 is an active-site residue.

Belongs to the DNA polymerase type-Y family. In terms of assembly, monomer. The cofactor is Mg(2+).

The protein localises to the cytoplasm. It catalyses the reaction DNA(n) + a 2'-deoxyribonucleoside 5'-triphosphate = DNA(n+1) + diphosphate. Its function is as follows. Poorly processive, error-prone DNA polymerase involved in untargeted mutagenesis. Copies undamaged DNA at stalled replication forks, which arise in vivo from mismatched or misaligned primer ends. These misaligned primers can be extended by PolIV. Exhibits no 3'-5' exonuclease (proofreading) activity. May be involved in translesional synthesis, in conjunction with the beta clamp from PolIII. The sequence is that of DNA polymerase IV from Leptospira interrogans serogroup Icterohaemorrhagiae serovar Lai (strain 56601).